We begin with the raw amino-acid sequence, 309 residues long: Cell division protein FtsQ (309 aa).

Topologically, residues 1 to 52 are cytoplasmic; it reads MLALRGRRGKRVRYPADGVAEADEAFVLPRPLRRGVRFLISLGAGRIRFPNH. A helical membrane pass occupies residues 53 to 74; sequence TGTVAAAAFMVATGLYGMSLGG. The Periplasmic portion of the chain corresponds to 75–309; that stretch reads HTQSFAQVST…KMLKAQEKRI (235 aa). Residues 89–157 enclose the POTRA domain; it reads FAIEDVRVSG…GTIEVVLKER (69 aa).

This sequence belongs to the FtsQ/DivIB family. FtsQ subfamily.

It localises to the cell inner membrane. In terms of biological role, essential cell division protein. This Rhizobium meliloti (strain 1021) (Ensifer meliloti) protein is Cell division protein FtsQ.